The sequence spans 402 residues: Multidrug resistance protein MdtH (402 aa).

At 1–12 (MSRVSQARNLGK) the chain is on the cytoplasmic side. A helical transmembrane segment spans residues 13 to 33 (YFLLIDNMLVVLGFFVVFPLI). The Periplasmic segment spans residues 34–98 (SIRFVDQMGW…GFATMGIAHE (65 aa)). Residues 99 to 116 (PWLLWFSCLLSGLGGTLF) traverse the membrane as a helical segment. Topologically, residues 117-138 (DPPRSALVVKLIRPQQRGRFFS) are cytoplasmic. Residues 139–159 (LLMMQDSASAVIGALLGSWLL) form a helical membrane-spanning segment. Residues 160–164 (QYDFR) are Periplasmic-facing. A helical membrane pass occupies residues 165 to 185 (LVCATGPVLFVLCAAFNAWLL). Residues 186 to 213 (PAWKLSTVRTPVREGMTRVMRDKRFVTY) are Cytoplasmic-facing. A helical transmembrane segment spans residues 214-234 (VLTLAGYYMLAVQVMLMLPIM). The Periplasmic portion of the chain corresponds to 235–243 (VNDVAGAPS). The chain crosses the membrane as a helical span at residues 244–264 (AVKWMYAIEACLSLTLLYPIA). Residues 265–276 (RWSEKHFRLEHR) are Cytoplasmic-facing. A helical membrane pass occupies residues 277 to 297 (LMAGLLIMSLSMMPVGMVSGL). Residues 298 to 299 (QQ) lie on the Periplasmic side of the membrane. The helical transmembrane segment at 300–320 (LFTLICLFYIGSIIAEPARET) threads the bilayer. Residues 321 to 339 (LSASLADARARGSYMGFSR) lie on the Cytoplasmic side of the membrane. The chain crosses the membrane as a helical span at residues 340–360 (LGLAIGGAIGYIGGGWLFDLG). Over 361 to 367 (KSAHQPE) the chain is Periplasmic. Residues 368–388 (LPWMMLGIIGIFTFLALGWQF) form a helical membrane-spanning segment. Residues 389–402 (SQKRAARRLLERDA) lie on the Cytoplasmic side of the membrane.

It belongs to the major facilitator superfamily. DHA1 family. MdtH (TC 2.A.1.2.21) subfamily.

The protein resides in the cell inner membrane. This Shigella flexneri serotype 5b (strain 8401) protein is Multidrug resistance protein MdtH.